A 219-amino-acid polypeptide reads, in one-letter code: Trafficking protein particle complex subunit 4 (219 aa).

Belongs to the TRAPP small subunits family. TRAPPC4 subfamily. Component of the multisubunit TRAPP (transport protein particle) complex, which includes at least TRAPPC2, TRAPPC2L, TRAPPC3, TRAPPC3L, TRAPPC4, TRAPPC5, TRAPPC8, TRAPPC9, TRAPPC10, TRAPPC11 and TRAPPC12. Interacts with SDC2.

It is found in the postsynaptic cell membrane. Its subcellular location is the golgi apparatus membrane. The protein resides in the endoplasmic reticulum. The protein localises to the vesicle. In terms of biological role, core component of the TRAPP complexes which has a function of guanine nucleotide exchange factor activity for Rab1 GTPase. Plays a role in vesicular transport from endoplasmic reticulum to Golgi and autophagy. May play a role in dendrite postsynaptic membrane trafficking. The sequence is that of Trafficking protein particle complex subunit 4 from Homo sapiens (Human).